A 640-amino-acid polypeptide reads, in one-letter code: Biosynthetic arginine decarboxylase (640 aa).

An N6-(pyridoxal phosphate)lysine modification is found at lysine 109. Substrate is bound at residue 291-301 (LDVGGGLGVDY).

This sequence belongs to the Orn/Lys/Arg decarboxylase class-II family. SpeA subfamily. It depends on Mg(2+) as a cofactor. Requires pyridoxal 5'-phosphate as cofactor.

The catalysed reaction is L-arginine + H(+) = agmatine + CO2. The protein operates within amine and polyamine biosynthesis; agmatine biosynthesis; agmatine from L-arginine: step 1/1. Catalyzes the biosynthesis of agmatine from arginine. The polypeptide is Biosynthetic arginine decarboxylase (Synechococcus sp. (strain RCC307)).